The primary structure comprises 593 residues: MAFRRTEGMSMIQALAMTVAEIPVFLYTTFGQSAFSQLRLTPGLRKVLFATALGTVALALAAHQLKRRRRKKKQVGPEMGGEQLGTVPMPILMARKVPSVKKGCSSRRVQSPSSKSNDTLSGISSIEPSKHSGSSHSLASMVVVNSSSPTAACSGSWEARGMEESVPTTDGSAESLYVQGMELFEEALQKWEQALSVGQRGDGGSTPTPGDSLQNPDTASEALSEPESQRREFAEKLESLLHRAYHLQEEFGSTFPSDSMLLDLERTLMLPLTEGSLRLRADDEDSLTSEDSFFSATEIFESLQIGEYPLPLSRPAAAYEEALQLVKEGRVPCRTLRTELLGCYSDQDFLAKLHCVRQAFEGLLEERSNQIFFGEVGRQMVTGLMTKAEKSPKGFLESYEEMLSYALRPETWATTRLELEGRGVACMSFFDIVLDFILMDAFEDLENPPSSVLAVLRNRWLSDSFKETALATACWSVLKAKRRLLMVPDGFISHFYSVSEHVSPVLAFGFLGPKPQLSEVCAFFKHQIVQYLRDMFDLDNVRYTSVPALAEDILQLSRRRSEILLGYLGAPVASSIGLNGPLPRENGPLEELQ.

2 helical membrane-spanning segments follow: residues 11–31 and 42–62; these read MIQA…TTFG and PGLR…ALAA. 3 disordered regions span residues 98-134, 150-171, and 197-229; these read PSVK…HSGS, TAAC…TTDG, and VGQR…PESQ. Low complexity-rich tracts occupy residues 106–116 and 124–134; these read SRRVQSPSSKS and SSIEPSKHSGS. Ser-132 carries the post-translational modification Phosphoserine. Positions 205-218 are enriched in polar residues; sequence STPTPGDSLQNPDT. Phosphothreonine is present on Thr-206. Phosphoserine is present on residues Ser-220, Ser-224, and Ser-228. Position 273 is a phosphothreonine (Thr-273). Residues Ser-276 and Ser-295 each carry the phosphoserine modification. The FFAT signature appears at 292–298; it reads SFFSATE.

It belongs to the mitoguardin family. As to quaternary structure, homodimer and heterodimer; forms heterodimers with MIGA1. Interacts with PLD6/MitoPLD. Interacts (via phosphorylated FFAT motif) with MOSPD2. In terms of processing, phosphorylation at Ser-295 of the FFAT motif activates interaction with MOSPD2.

It localises to the mitochondrion outer membrane. Functionally, regulator of mitochondrial fusion. Acts by forming homo- and heterodimers at the mitochondrial outer membrane and facilitating the formation of PLD6/MitoPLD dimers. May act by regulating phospholipid metabolism via PLD6/MitoPLD. In Mus musculus (Mouse), this protein is Mitoguardin 2.